The following is a 1027-amino-acid chain: INO80 complex subunit D (1027 aa).

Lys-87 participates in a covalent cross-link: Glycyl lysine isopeptide (Lys-Gly) (interchain with G-Cter in SUMO2). Ser-132 bears the Phosphoserine mark. Disordered regions lie at residues 193 to 278, 519 to 574, 813 to 850, 914 to 969, and 982 to 1027; these read HFSP…VDPP, RGDN…LSMP, RQQY…HTTS, LSTS…TSPK, and QLSS…PSPN. A compositionally biased stretch (low complexity) spans 201–216; it reads SQQQPPQQHSHLSPLS. Residues 229–257 show a composition bias toward polar residues; that stretch reads VCKSPQPQNTSLPMQGVAPTTHTIAQARQ. Residues 525–559 show a composition bias toward basic residues; sequence KVQHQQQRKPRKKTKPPALTKKHKKKRRRGPRRPQ. Over residues 914–932 the composition is skewed to low complexity; that stretch reads LSTSLSTPPTTSNSETTQP. Polar residues predominate over residues 937-954; the sequence is VTPSSSSVLPGLPQTSFS. The span at 1001–1027 shows a compositional bias: low complexity; sequence APPTGFTVTGATATSTNNASSPFPSPN.

The protein belongs to the INO80D family. As to quaternary structure, component of the chromatin remodeling INO80 complex; specifically part of a complex module associated with the N-terminus of INO80.

The protein localises to the nucleus. In terms of biological role, putative regulatory component of the chromatin remodeling INO80 complex which is involved in transcriptional regulation, DNA replication and probably DNA repair. The polypeptide is INO80 complex subunit D (Homo sapiens (Human)).